Here is a 590-residue protein sequence, read N- to C-terminus: Threonine dehydratase biosynthetic, chloroplastic (590 aa).

The N-terminal 44 residues, 1–44 (MLSTSTTNSSILPFRSRASSSTFIARPPANFNSIFTTSVRVFPI), are a transit peptide targeting the chloroplast. Lys139 is subject to N6-(pyridoxal phosphate)lysine. ACT-like domains lie at 416–488 (ALLG…NISH) and 509–580 (EVFV…IDQY).

The protein belongs to the serine/threonine dehydratase family. Pyridoxal 5'-phosphate is required as a cofactor. As to expression, found at higher levels in flowers than in other organs.

The protein localises to the plastid. It localises to the chloroplast. The enzyme catalyses L-threonine = 2-oxobutanoate + NH4(+). It functions in the pathway amino-acid biosynthesis; L-isoleucine biosynthesis; 2-oxobutanoate from L-threonine: step 1/1. Allosterically inhibited by isoleucine. The protein is Threonine dehydratase biosynthetic, chloroplastic of Cicer arietinum (Chickpea).